Here is a 308-residue protein sequence, read N- to C-terminus: Homeobox-leucine zipper protein HOX2 (308 aa).

Disordered regions lie at residues 15-36 and 71-117; these read QGSL…SSPW and QGRA…RKKL. A compositionally biased stretch (low complexity) spans 74-88; sequence ASTSPDSAAALSSAS. Positions 112 to 171 form a DNA-binding region, homeobox; sequence GGRKKLRLSKDQAAVLEECFKTHSTLNPKQKVALANRLGLRPRQVEVWFQNRRARTKLKQ. Residues 170–214 are leucine-zipper; that stretch reads KQTEVDCEYLKRWCERLADENKRLEKELADLRALKAAPSPASASA.

The protein belongs to the HD-ZIP homeobox family. Class II subfamily. As to quaternary structure, homodimer. May form a heterodimer with HOX1, HOX3 or HOX7. As to expression, expressed in seedlings, roots, leaves, nodes, internodes, flowers and embryo.

It is found in the nucleus. In terms of biological role, probable transcription factor that binds to the DNA sequence 5'-CAAT[GC]ATTG-3'. This chain is Homeobox-leucine zipper protein HOX2 (HOX2), found in Oryza sativa subsp. indica (Rice).